Here is a 148-residue protein sequence, read N- to C-terminus: Hemoglobin subunit beta (148 aa).

Residues 3 to 148 (DWTDAERSAI…VVSALGRQYH (146 aa)) enclose the Globin domain. His-64 and His-93 together coordinate heme b.

It belongs to the globin family. Heterotetramer of two alpha chains and two beta chains. As to expression, red blood cells.

Its function is as follows. Involved in oxygen transport from gills to the various peripheral tissues. The sequence is that of Hemoglobin subunit beta (hbb) from Salmo salar (Atlantic salmon).